A 427-amino-acid chain; its full sequence is Trigger factor (427 aa).

Positions 163-248 constitute a PPIase FKBP-type domain; that stretch reads GDTVVIDFVG…IHEVKAKEVP (86 aa).

Belongs to the FKBP-type PPIase family. Tig subfamily.

It is found in the cytoplasm. It catalyses the reaction [protein]-peptidylproline (omega=180) = [protein]-peptidylproline (omega=0). Functionally, involved in protein export. Acts as a chaperone by maintaining the newly synthesized protein in an open conformation. Functions as a peptidyl-prolyl cis-trans isomerase. In Streptococcus suis (strain 98HAH33), this protein is Trigger factor.